Consider the following 133-residue polypeptide: Thioredoxin-2, mitochondrial (133 aa).

The transit peptide at 1–29 (MRGFIANSLKPHMRSFALRRSFTSSRILR) directs the protein to the mitochondrion. One can recognise a Thioredoxin domain in the interval 30 to 133 (KVNAVESFGD…LSSLLAKYQE (104 aa)). Residues cysteine 59 and cysteine 62 each act as nucleophile in the active site. The cysteines at positions 59 and 62 are disulfide-linked.

The protein belongs to the thioredoxin family. As to quaternary structure, interacts with arg3.

The protein resides in the mitochondrion. In terms of biological role, disulfide reductase which serves multiple functions in mitochondria, protecting mitochondrial components against thiol-oxidative damage as a thiol-disulfide oxidoreductase, and supporting urea cycle and respiration in mitochondria in a manner independent of active site thiols. The sequence is that of Thioredoxin-2, mitochondrial (trx2) from Schizosaccharomyces pombe (strain 972 / ATCC 24843) (Fission yeast).